The chain runs to 219 residues: Proline-rich protein 27 (219 aa).

The N-terminal stretch at 1 to 15 is a signal peptide; it reads MKLLLWACIVCVAFA. Residues 155-204 are compositionally biased toward low complexity; sequence AAEPAAEAPVGAEPAAEAPVAAEPAAEAPVGVEPAAEEPSPAEPATAKPA. Residues 155–219 form a disordered region; the sequence is AAEPAAEAPV…PSPSLEQANQ (65 aa).

Its subcellular location is the secreted. This Homo sapiens (Human) protein is Proline-rich protein 27 (PRR27).